A 204-amino-acid chain; its full sequence is NADH-quinone oxidoreductase subunit C (204 aa).

The protein belongs to the complex I 30 kDa subunit family. As to quaternary structure, NDH-1 is composed of 14 different subunits. Subunits NuoB, C, D, E, F, and G constitute the peripheral sector of the complex.

It is found in the cell inner membrane. The enzyme catalyses a quinone + NADH + 5 H(+)(in) = a quinol + NAD(+) + 4 H(+)(out). NDH-1 shuttles electrons from NADH, via FMN and iron-sulfur (Fe-S) centers, to quinones in the respiratory chain. The immediate electron acceptor for the enzyme in this species is believed to be ubiquinone. Couples the redox reaction to proton translocation (for every two electrons transferred, four hydrogen ions are translocated across the cytoplasmic membrane), and thus conserves the redox energy in a proton gradient. In Polaromonas naphthalenivorans (strain CJ2), this protein is NADH-quinone oxidoreductase subunit C.